A 117-amino-acid chain; its full sequence is MTESFTRRERLRLRRDFLLIFKEGKSLQNEYFVVLFRKNGLDYSRLGIVVKRKFGKATRRNKLKRWVREIFRRNKGVIPKGFDIVVIPRKKLSEEFERVDFWTVREKLLNLLKRIEG.

This sequence belongs to the RnpA family. As to quaternary structure, consists of a catalytic RNA component (M1 or rnpB) and a protein subunit.

It catalyses the reaction Endonucleolytic cleavage of RNA, removing 5'-extranucleotides from tRNA precursor.. Its function is as follows. RNaseP catalyzes the removal of the 5'-leader sequence from pre-tRNA to produce the mature 5'-terminus. It can also cleave other RNA substrates such as 4.5S RNA. The protein component plays an auxiliary but essential role in vivo by binding to the 5'-leader sequence and broadening the substrate specificity of the ribozyme. This chain is Ribonuclease P protein component, found in Thermotoga maritima (strain ATCC 43589 / DSM 3109 / JCM 10099 / NBRC 100826 / MSB8).